Here is a 261-residue protein sequence, read N- to C-terminus: Carnitinyl-CoA dehydratase (261 aa).

Glu111 functions as the Nucleophile in the catalytic mechanism. Residue Glu131 is the Proton acceptor of the active site.

This sequence belongs to the enoyl-CoA hydratase/isomerase family.

It carries out the reaction (R)-carnitinyl-CoA = crotonobetainyl-CoA + H2O. It participates in amine and polyamine metabolism; carnitine metabolism. Functionally, catalyzes the reversible dehydration of L-carnitinyl-CoA to crotonobetainyl-CoA. This is Carnitinyl-CoA dehydratase from Escherichia coli O157:H7.